The following is a 953-amino-acid chain: 26S proteasome non-ATPase regulatory subunit 1 (953 aa).

Met1 bears the N-acetylmethionine mark. The residue at position 273 (Thr273) is a Phosphothreonine. Residues 277-319 (SVPGSTNTGTVPGSEKDSDPMETEEKTASAVAGKTPDASPEPK) are disordered. Ser290 bears the Phosphoserine mark. The segment covering 290-303 (SEKDSDPMETEEKT) has biased composition (basic and acidic residues). Lys310 carries the post-translational modification N6-acetyllysine. Residue Thr311 is modified to Phosphothreonine. Ser315 is subject to Phosphoserine. PC repeat units follow at residues 403–436 (TATASLGVIHKGHEKEALQLMATYLPKDTSPGSA), 441–474 (GGLYALGLIHANHGGDIIDYLLNQLKNASNDIVR), 476–510 (GGSLGLGLAAMGTARQDVYDLLKTNLYQDDAVTGE), 511–545 (AAGLALGLVMLGSKNAQAIEDMVGYAQETQHEKIL), 547–580 (GLAVGIALVMYGRMEEADALIESLCRDKDPILRR), 581–616 (SGMYTVAMAYCGSGNNKAIRRLLHVAVSDVNDDVRR), 617–649 (AAVESLGFILFRTPEQCPSVVSLLSESYNPHVR), 651–685 (GAAMALGICCAGTGNKEAINLLEPMTNDPVNYVRQ), 686–726 (GALI…DVMA), and 729–761 (GAILAQGILDAGGHNVTISLQSRTGHTHMPSVV). N6-acetyllysine is present on Lys720. Thr830 is subject to Phosphothreonine. Ser834 is modified (phosphoserine). 2 disordered regions span residues 839 to 881 (AKKK…LDNP) and 930 to 953 (AHGPKIEEEEQEPEPPEPFEYIDD). Basic and acidic residues-rich tracts occupy residues 842 to 852 (KEKEKEKKEEE) and 859 to 872 (AEKKEEKEKKKEPE). A compositionally biased stretch (acidic residues) spans 936–953 (EEEEQEPEPPEPFEYIDD).

This sequence belongs to the proteasome subunit S1 family. In terms of assembly, component of the 19S proteasome regulatory particle complex. The 26S proteasome consists of a 20S core particle (CP) and two 19S regulatory subunits (RP). The regulatory particle is made of a lid composed of 9 subunits, a base containing 6 ATPases and few additional components including PSMD1. Interacts with ADRM1. Interacts with ZFAND1.

In terms of biological role, component of the 26S proteasome, a multiprotein complex involved in the ATP-dependent degradation of ubiquitinated proteins. This complex plays a key role in the maintenance of protein homeostasis by removing misfolded or damaged proteins, which could impair cellular functions, and by removing proteins whose functions are no longer required. Therefore, the proteasome participates in numerous cellular processes, including cell cycle progression, apoptosis, or DNA damage repair. The polypeptide is 26S proteasome non-ATPase regulatory subunit 1 (Psmd1) (Mus musculus (Mouse)).